The sequence spans 118 residues: UPF0329 protein ECU03_0030/ECU05_0040/ECU06_0010/ECU06_1710/ECU11_0010 (118 aa).

Belongs to the UPF0329 family.

The polypeptide is UPF0329 protein ECU03_0030/ECU05_0040/ECU06_0010/ECU06_1710/ECU11_0010 (Encephalitozoon cuniculi (strain GB-M1) (Microsporidian parasite)).